The primary structure comprises 577 residues: Insulin-like growth factor 2 mRNA-binding protein 1 (577 aa).

RRM domains follow at residues 2–75 (NKLY…HSVP) and 81–156 (RKIQ…YIPD). A phosphoserine mark is found at Ser-12 and Ser-73. Positions 160 to 190 (AQGPENGRRGGFGSRGQPRQGSPVAAGAPAK) are disordered. Residue Ser-181 is modified to Phosphoserine. 4 KH domains span residues 195 to 260 (DIPL…CKMI), 276 to 343 (EVPL…EQEI), 405 to 470 (QEMV…QGRI), and 487 to 553 (KLET…QRKI). A sufficient for nuclear export region spans residues 310–324 (ITISSLQDLTLYNPE). The interval 485-495 (EVKLETHIRVP) is sufficient for nuclear export. Position 528 is a phosphothreonine (Thr-528).

It belongs to the RRM IMP/VICKZ family. As to quaternary structure, can form homodimers and heterodimers with IGF2BP1 and IGF2BP3. Component of the coding region determinant (CRD)-mediated complex, composed of DHX9, HNRNPU, IGF2BP1, SYNCRIP and YBX1. During HCV infection, identified in a HCV IRES-mediated translation complex, at least composed of EIF3C, IGF2BP1, RPS3 and HCV RNA-replicon. Interacts (via the KH domains) with HIV-1 GAG (via the second zinc finger motif of NC). Associates (via the RRM domains and KH domains) with HIV-1 particles. Identified in a mRNP complex, composed of at least DHX9, DDX3X, ELAVL1, HNRNPU, IGF2BP1, ILF3, PABPC1, PCBP2, PTBP2, STAU1, STAU2, SYNCRIP and YBX1. Identified in a IGF2BP1-dependent mRNP granule complex containing untranslated mRNAs. Interacts with DHX9, ELAVL2, HNRNPA2B1, HNRNPC, HNRNPH1, HNRNPU, IGF2BP2, ILF2, and YBX1. Interacts with FMR1. Component of a multisubunit autoregulatory RNP complex (ARC), at least composed of IGF2BP1, PABPC1 and CSDE1/UNR. Directly interacts with PABPC1. Component of a TAU mRNP complex, at least composed of IGF2BP1, ELAVL4 and G3BP. Interacts with ELAVL4 in an RNA-dependent manner. Associates with microtubules and polysomes. Interacts with AGO1 and AGO2. Interacts with ELAVL1 and MATR3. Interacts (via KH3 and KH4 domains) with SEPIN14P20 peptide RBRP; the interaction results in increased binding of IGF2BP1 to N6-methyladenosine (m6A)-containing mRNAs. Phosphorylated at Ser-181 by mTORC2 cotranslationally, promoting binding to the 3'-UTR of IGF2 mRNA. In terms of tissue distribution, mainly expressed in the embryo, including in fetal liver, fetal lung, fetal kidney, fetal thymus (at protein level). Also expressed follicles of ovary, as well as in gonocytes of testis, spermatogonia, semen, oocytes and placenta (at protein level). Expressed in various cancers, including testis and lung cancers (at protein level), as well as kidney, prostate and trachea cancers.

It localises to the nucleus. The protein resides in the cytoplasm. It is found in the perinuclear region. The protein localises to the P-body. Its subcellular location is the stress granule. It localises to the cell projection. The protein resides in the lamellipodium. It is found in the dendrite. The protein localises to the dendritic spine. Its subcellular location is the growth cone. It localises to the filopodium. The protein resides in the axon. Functionally, RNA-binding factor that recruits target transcripts to cytoplasmic protein-RNA complexes (mRNPs). This transcript 'caging' into mRNPs allows mRNA transport and transient storage. It also modulates the rate and location at which target transcripts encounter the translational apparatus and shields them from endonuclease attacks or microRNA-mediated degradation. Preferentially binds to N6-methyladenosine (m6A)-containing mRNAs and increases their stability. Plays a direct role in the transport and translation of transcripts required for axonal regeneration in adult sensory neurons. Regulates localized beta-actin/ACTB mRNA translation, a crucial process for cell polarity, cell migration and neurite outgrowth. Co-transcriptionally associates with the ACTB mRNA in the nucleus. This binding involves a conserved 54-nucleotide element in the ACTB mRNA 3'-UTR, known as the 'zipcode'. The RNP thus formed is exported to the cytoplasm, binds to a motor protein and is transported along the cytoskeleton to the cell periphery. During transport, prevents ACTB mRNA from being translated into protein. When the RNP complex reaches its destination near the plasma membrane, IGF2BP1 is phosphorylated. This releases the mRNA, allowing ribosomal 40S and 60S subunits to assemble and initiate ACTB protein synthesis. Monomeric ACTB then assembles into the subcortical actin cytoskeleton. During neuronal development, key regulator of neurite outgrowth, growth cone guidance and neuronal cell migration, presumably through the spatiotemporal fine tuning of protein synthesis, such as that of ACTB. May regulate mRNA transport to activated synapses. Binds to and stabilizes ABCB1/MDR-1 mRNA. During interstinal wound repair, interacts with and stabilizes PTGS2 transcript. PTGS2 mRNA stabilization may be crucial for colonic mucosal wound healing. Binds to the 3'-UTR of IGF2 mRNA by a mechanism of cooperative and sequential dimerization and regulates IGF2 mRNA subcellular localization and translation. Binds to MYC mRNA, in the coding region instability determinant (CRD) of the open reading frame (ORF), hence preventing MYC cleavage by endonucleases and possibly microRNA targeting to MYC-CRD. Binding to MYC mRNA is enhanced by m6A-modification of the CRD. Binds to the 3'-UTR of CD44 mRNA and stabilizes it, hence promotes cell adhesion and invadopodia formation in cancer cells. Binds to the oncofetal H19 transcript and to the neuron-specific TAU mRNA and regulates their localizations. Binds to and stabilizes BTRC/FBW1A mRNA. Binds to the adenine-rich autoregulatory sequence (ARS) located in PABPC1 mRNA and represses its translation. PABPC1 mRNA-binding is stimulated by PABPC1 protein. Prevents BTRC/FBW1A mRNA degradation by disrupting microRNA-dependent interaction with AGO2. Promotes the directed movement of tumor-derived cells by fine-tuning intracellular signaling networks. Binds to MAPK4 3'-UTR and inhibits its translation. Interacts with PTEN transcript open reading frame (ORF) and prevents mRNA decay. This combined action on MAPK4 (down-regulation) and PTEN (up-regulation) antagonizes HSPB1 phosphorylation, consequently it prevents G-actin sequestration by phosphorylated HSPB1, allowing F-actin polymerization. Hence enhances the velocity of cell migration and stimulates directed cell migration by PTEN-modulated polarization. Interacts with Hepatitis C virus (HCV) 5'-UTR and 3'-UTR and specifically enhances translation at the HCV IRES, but not 5'-cap-dependent translation, possibly by recruiting eIF3. Interacts with HIV-1 GAG protein and blocks the formation of infectious HIV-1 particles. Reduces HIV-1 assembly by inhibiting viral RNA packaging, as well as assembly and processing of GAG protein on cellular membranes. During cellular stress, such as oxidative stress or heat shock, stabilizes target mRNAs that are recruited to stress granules, including CD44, IGF2, MAPK4, MYC, PTEN, RAPGEF2 and RPS6KA5 transcripts. This chain is Insulin-like growth factor 2 mRNA-binding protein 1 (IGF2BP1), found in Homo sapiens (Human).